We begin with the raw amino-acid sequence, 772 residues long: Putative ribosomal protein S6 kinase alpha-2 (772 aa).

Residues Phe17–Met284 form the Protein kinase 1 domain. ATP contacts are provided by residues Leu23–Val31 and Lys49. Asp145 acts as the Proton acceptor in catalysis. 3 positions are modified to phosphoserine; by autocatalysis: Ser180, Ser342, and Ser347. Positions Ser285–Asp353 constitute an AGC-kinase C-terminal domain. Residues Lys382–Leu653 form the Protein kinase 2 domain. Residues Leu388 to Val396 and Lys411 each bind ATP. The active-site Proton acceptor is Asp500. Residues Arg706–Ser772 are disordered. Ser712 carries the phosphoserine; by autocatalysis modification. Polar residues-rich tracts occupy residues Ser718 to Thr727 and Glu739 to Ser748.

Belongs to the protein kinase superfamily. AGC Ser/Thr protein kinase family. S6 kinase subfamily. Mg(2+) is required as a cofactor.

It carries out the reaction L-seryl-[protein] + ATP = O-phospho-L-seryl-[protein] + ADP + H(+). The catalysed reaction is L-threonyl-[protein] + ATP = O-phospho-L-threonyl-[protein] + ADP + H(+). Activated by multiple phosphorylations on threonine and serine residues. Functionally, serine/threonine kinase that may play a role in mediating the mitogen- and stress-induced effects on transcription. May repress transcription via phosphorylation of 'Ser-1' of histone H2A. May phosphorylate histone H3. This Caenorhabditis elegans protein is Putative ribosomal protein S6 kinase alpha-2 (rskn-2).